A 461-amino-acid chain; its full sequence is Flavin-containing monooxygenase FMO GS-OX-like 8 (461 aa).

An FAD-binding site is contributed by 20-25 (GAGPSG). 220–225 (GCSMSG) lines the NADP(+) pocket.

It belongs to the FMO family. Interacts with EER5. Requires FAD as cofactor.

In terms of biological role, catalyzes the conversion of methylthioalkyl glucosinolates of any chain length into methylsulfinylalkyl glucosinolates. In Arabidopsis thaliana (Mouse-ear cress), this protein is Flavin-containing monooxygenase FMO GS-OX-like 8.